The primary structure comprises 603 residues: MKYDKKYVRNFSIIAHIDHGKSTLADRLIEETGMLTHREMSEQVLDSMDLERERGITIKLKAIKLFYKAKDNNVYILNLIDTPGHVDFTYEVSRSLKACEGAVLIVDATQGVEAQTLGNVYLAIDQDLEILPVINKIDLPSADINFAKKEIEDIIGLDAENVPAVSAKEGINIVDVLEDIVKNVPAPIGDENKPLKALIFDSYYDFYKGVVVYVRVFDGCIKPGSEILMMSTNKTFEVTECGYTSSGMISTDEISAGDVGYVVCSIKNVKDARVGDTITDKNNPVDKPLEGYKQVTPMVYCGIYPAEGEDFNSVRDALEKLQVNDAALTFENETSIALGFGLRCGFLGLLHMEIIQERLDREFDLDIIATAPSVIYKVHKKDGTEIEIQNPTNFPKETEIDYVEEPVVHAEIMTPTDYVGVIMELCQGKRGTFIDMTYLDEKRVTIKYKLPLNEVIYDFYDALKSKTRGYASLDYELIGYEKSNLIKLEIMINSEKVDALTIIVHEDLAYERARKIVTKLKDEIPRHQFVIPVQAAIGNKIIARETIKAYRKDVLAKCYGGDITRKRKLLEKQKEGKKRMRSVGSVDVPQEAFLSVLKYDEVN.

In terms of domain architecture, tr-type G spans 6–188 (KYVRNFSIIA…DIVKNVPAPI (183 aa)). GTP-binding positions include 18–23 (DHGKST) and 135–138 (NKID).

This sequence belongs to the TRAFAC class translation factor GTPase superfamily. Classic translation factor GTPase family. LepA subfamily.

It is found in the cell membrane. It catalyses the reaction GTP + H2O = GDP + phosphate + H(+). In terms of biological role, required for accurate and efficient protein synthesis under certain stress conditions. May act as a fidelity factor of the translation reaction, by catalyzing a one-codon backward translocation of tRNAs on improperly translocated ribosomes. Back-translocation proceeds from a post-translocation (POST) complex to a pre-translocation (PRE) complex, thus giving elongation factor G a second chance to translocate the tRNAs correctly. Binds to ribosomes in a GTP-dependent manner. This is Elongation factor 4 from Finegoldia magna (strain ATCC 29328 / DSM 20472 / WAL 2508) (Peptostreptococcus magnus).